We begin with the raw amino-acid sequence, 195 residues long: Dephospho-CoA kinase (195 aa).

The DPCK domain maps to 4-195; it reads IIGLTGGIAS…EQILDALQRL (192 aa). 12-17 provides a ligand contact to ATP; that stretch reads ASGKST.

This sequence belongs to the CoaE family.

It is found in the cytoplasm. The catalysed reaction is 3'-dephospho-CoA + ATP = ADP + CoA + H(+). It functions in the pathway cofactor biosynthesis; coenzyme A biosynthesis; CoA from (R)-pantothenate: step 5/5. Catalyzes the phosphorylation of the 3'-hydroxyl group of dephosphocoenzyme A to form coenzyme A. This chain is Dephospho-CoA kinase, found in Streptococcus agalactiae serotype Ia (strain ATCC 27591 / A909 / CDC SS700).